The chain runs to 156 residues: ATP synthase subunit b (156 aa).

Residues alanine 11–alanine 31 traverse the membrane as a helical segment.

The protein belongs to the ATPase B chain family. F-type ATPases have 2 components, F(1) - the catalytic core - and F(0) - the membrane proton channel. F(1) has five subunits: alpha(3), beta(3), gamma(1), delta(1), epsilon(1). F(0) has three main subunits: a(1), b(2) and c(10-14). The alpha and beta chains form an alternating ring which encloses part of the gamma chain. F(1) is attached to F(0) by a central stalk formed by the gamma and epsilon chains, while a peripheral stalk is formed by the delta and b chains.

The protein localises to the cell inner membrane. In terms of biological role, f(1)F(0) ATP synthase produces ATP from ADP in the presence of a proton or sodium gradient. F-type ATPases consist of two structural domains, F(1) containing the extramembraneous catalytic core and F(0) containing the membrane proton channel, linked together by a central stalk and a peripheral stalk. During catalysis, ATP synthesis in the catalytic domain of F(1) is coupled via a rotary mechanism of the central stalk subunits to proton translocation. Component of the F(0) channel, it forms part of the peripheral stalk, linking F(1) to F(0). The sequence is that of ATP synthase subunit b from Salmonella agona (strain SL483).